The chain runs to 41 residues: U3-theraphotoxin-Hs1a (41 aa).

3 disulfide bridges follow: C2–C16, C9–C37, and C17–C40.

Belongs to the neurotoxin 14 (magi-1) family. 01 (HNTX-16) subfamily. Expressed by the venom gland.

The protein localises to the secreted. Functionally, intracerebroventricular injection paralyzes mice. Has no effect on voltage-gated sodium currents. In Cyriopagopus schmidti (Chinese bird spider), this protein is U3-theraphotoxin-Hs1a.